A 168-amino-acid chain; its full sequence is Fusaric acid resistance protein FusE (168 aa).

Involved in the resistance (detoxification) of the fungal toxin fusaric acid. This is Fusaric acid resistance protein FusE (fusE) from Burkholderia cepacia (Pseudomonas cepacia).